Consider the following 187-residue polypeptide: Elongation factor P (187 aa).

This sequence belongs to the elongation factor P family.

The protein resides in the cytoplasm. It participates in protein biosynthesis; polypeptide chain elongation. Its function is as follows. Involved in peptide bond synthesis. Stimulates efficient translation and peptide-bond synthesis on native or reconstituted 70S ribosomes in vitro. Probably functions indirectly by altering the affinity of the ribosome for aminoacyl-tRNA, thus increasing their reactivity as acceptors for peptidyl transferase. The sequence is that of Elongation factor P from Clavibacter michiganensis subsp. michiganensis (strain NCPPB 382).